Reading from the N-terminus, the 365-residue chain is Cytochrome P450 71A3 (365 aa).

This sequence belongs to the cytochrome P450 family. Requires heme as cofactor.

Functionally, may have a role in maturation, such as during flavor formation or other metabolite production specific to aging tissues. This is Cytochrome P450 71A3 (CYP71A3) from Solanum melongena (Eggplant).